The sequence spans 79 residues: Small ribosomal subunit protein bS18 (79 aa).

The protein belongs to the bacterial ribosomal protein bS18 family. Part of the 30S ribosomal subunit. Forms a tight heterodimer with protein bS6.

In terms of biological role, binds as a heterodimer with protein bS6 to the central domain of the 16S rRNA, where it helps stabilize the platform of the 30S subunit. The sequence is that of Small ribosomal subunit protein bS18 from Rhodopseudomonas palustris (strain BisB5).